A 476-amino-acid chain; its full sequence is Variant surface glycoprotein MITAT 1.2 (476 aa).

Positions Met-1 to Ser-26 are cleaved as a signal peptide. Disulfide bonds link Cys-41-Cys-171 and Cys-149-Cys-213. The N-linked (GlcNAc...) asparagine glycan is linked to Asn-289. 2 disordered regions span residues Gln-389–Pro-418 and Glu-435–Ser-459. 2 disulfide bridges follow: Cys-407–Cys-419 and Cys-415–Cys-430. Residues Glu-435–Lys-449 show a composition bias toward basic and acidic residues. Low complexity predominate over residues Thr-450–Ser-459. N-linked (GlcNAc...) asparagine glycosylation occurs at Asn-454. Ser-459 carries GPI-anchor amidated serine lipidation. Residues Asn-460–Phe-476 constitute a propeptide, removed in mature form.

As to quaternary structure, homodimer.

It localises to the cell membrane. VSG forms a coat on the surface of the parasite. The trypanosome evades the immune response of the host by expressing a series of antigenically distinct VSGs from an estimated 1000 VSG genes. The sequence is that of Variant surface glycoprotein MITAT 1.2 from Trypanosoma brucei brucei.